We begin with the raw amino-acid sequence, 51 residues long: Lantibiotic flavucin (51 aa).

A propeptide spanning residues 1–20 is cleaved from the precursor; that stretch reads MSDFTLDFAEGDAADTVSPQ. A cross-link (lanthionine (Ser-Cys)) is located at residues 23 to 27; sequence SKSLC. 3 cross-links (beta-methyllanthionine (Thr-Cys)) span residues 28 to 31, 33 to 38, and 42 to 45; these read TPGC, TGWMMC, and TKGC.

This sequence belongs to the type A lantibiotic family. Maturation of lantibiotics involves the enzymatic conversion of Thr, and Ser into dehydrated AA and the formation of thioether bonds with cysteine. This is followed by membrane translocation and cleavage of the modified precursor.

With respect to regulation, antimicrobial activity depends on the dehydration degree and integrity of flavucin. Lanthionine-containing peptide antibiotic (lantibiotic) active on certain Gram-positive bacteria. The bactericidal activity of lantibiotics is based on depolarization of energized bacterial cytoplasmic membranes, initiated by the formation of aqueous transmembrane pores. Flavucin has high antimicrobial activity against several pathogenic bacteria such as S.aureus, E.faecalis, E.faecium and L.monocytogenes. Is also active against the Gram-negative P.aeruginosa. The polypeptide is Lantibiotic flavucin (Corynebacterium lipophiloflavum (strain ATCC 700352 / DSM 44291 / CCUG 37336 / JCM 10383 / DMMZ 1944)).